A 135-amino-acid polypeptide reads, in one-letter code: uncharacterized protein (135 aa).

This is an uncharacterized protein from Rickettsia prowazekii (strain Madrid E).